The following is a 313-amino-acid chain: Undecaprenyl-diphosphatase (313 aa).

The next 6 membrane-spanning stretches (helical) occupy residues 121–141 (YRIG…GFLF), 152–172 (LWLV…AEHY), 187–207 (GLVM…RSGA), 225–245 (FSFL…LPDA), 259–279 (QLLV…AWLL), and 290–310 (FVGY…AGVI).

This sequence belongs to the UppP family.

Its subcellular location is the cell membrane. It carries out the reaction di-trans,octa-cis-undecaprenyl diphosphate + H2O = di-trans,octa-cis-undecaprenyl phosphate + phosphate + H(+). Its function is as follows. Catalyzes the dephosphorylation of undecaprenyl diphosphate (UPP). Confers resistance to bacitracin. This chain is Undecaprenyl-diphosphatase, found in Nocardia farcinica (strain IFM 10152).